Here is a 340-residue protein sequence, read N- to C-terminus: Uroporphyrinogen decarboxylase (340 aa).

Substrate is bound by residues 21 to 25 (RQAGR), Asp-71, Tyr-147, Ser-202, and His-315.

The protein belongs to the uroporphyrinogen decarboxylase family. Homodimer.

It is found in the cytoplasm. It catalyses the reaction uroporphyrinogen III + 4 H(+) = coproporphyrinogen III + 4 CO2. It functions in the pathway porphyrin-containing compound metabolism; protoporphyrin-IX biosynthesis; coproporphyrinogen-III from 5-aminolevulinate: step 4/4. Functionally, catalyzes the decarboxylation of four acetate groups of uroporphyrinogen-III to yield coproporphyrinogen-III. In Nautilia profundicola (strain ATCC BAA-1463 / DSM 18972 / AmH), this protein is Uroporphyrinogen decarboxylase.